Consider the following 528-residue polypeptide: Benzoylformate decarboxylase (528 aa).

The Mg(2+) site is built by Gln-117 and Leu-118. Residues 377-460 are thiamine pyrophosphate binding; it reads TSTVTAFWQR…IILKNGTYGA (84 aa). Ca(2+) is bound by residues Asp-428, Asn-455, and Thr-457.

The protein belongs to the TPP enzyme family. Homotetramer. The cofactor is Ca(2+). Thiamine diphosphate serves as cofactor. Requires Mg(2+) as cofactor.

It carries out the reaction phenylglyoxylate + H(+) = benzaldehyde + CO2. It functions in the pathway aromatic compound metabolism; (R)-mandelate degradation; benzoate from (R)-mandelate: step 3/4. The sequence is that of Benzoylformate decarboxylase (mdlC) from Pseudomonas aeruginosa (strain ATCC 15692 / DSM 22644 / CIP 104116 / JCM 14847 / LMG 12228 / 1C / PRS 101 / PAO1).